Here is a 136-residue protein sequence, read N- to C-terminus: NADPH-dependent 7-cyano-7-deazaguanine reductase (136 aa).

C50 functions as the Thioimide intermediate in the catalytic mechanism. D57 (proton donor) is an active-site residue. Substrate contacts are provided by residues 72-74 and 91-92; these read YEL and HE.

Belongs to the GTP cyclohydrolase I family. QueF type 1 subfamily.

Its subcellular location is the cytoplasm. It carries out the reaction 7-aminomethyl-7-carbaguanine + 2 NADP(+) = 7-cyano-7-deazaguanine + 2 NADPH + 3 H(+). It participates in tRNA modification; tRNA-queuosine biosynthesis. Its function is as follows. Catalyzes the NADPH-dependent reduction of 7-cyano-7-deazaguanine (preQ0) to 7-aminomethyl-7-deazaguanine (preQ1). This chain is NADPH-dependent 7-cyano-7-deazaguanine reductase, found in Prochlorococcus marinus (strain MIT 9301).